The primary structure comprises 385 residues: Elsinochromes biosynthesis cluster protein HP2 (385 aa).

Residues 1–22 (MVLLYILIMVALIPMYMTVVQD) form the signal peptide. The next 2 membrane-spanning stretches (helical) occupy residues 94–114 (TVLSALLLTFVFFWRMLSMFD) and 148–168 (FYGQALYFGIMCLYTAHIVLW). N187 carries an N-linked (GlcNAc...) asparagine glycan. Residues 209 to 229 (SWTFGQIVPIVLLVSPLVAAF) form a helical membrane-spanning segment. A glycan (N-linked (GlcNAc...) asparagine) is linked at N248. Helical transmembrane passes span 309 to 329 (AILFWELHVLLAFMVIWLPLA) and 344 to 364 (YYAFPAAVGTFWLTVVIAVPF).

It localises to the membrane. In terms of biological role, part of the gene cluster that mediates the biosynthesis of elsinochromes, pigments consisting of at least four interconvertible tautomers (A, B, C and D) that have a core phenolic quinone to which various side chains are attached and which play an important role in fungal pathogenesis. The non-reducing polyketide synthase PKS1 was proposed to iteratively catalyze decarboxylation between acetyl-CoA and malonyl-CoA subunits for polyketide chain elongation. The released polyketide undergoes cyclization to form an aromatic ring, and proceeds via serial modification steps to produce the heptaketide back- bone of elsinochrome. As elsinochrome has a symmetrical structure, two identical heptaketides are fused to form a core 1,2-dihydrobenzo-perylene ring structure, which can then be successively modified to produce the various derivatives of elsinochrome. Some of these reactions may be cooperatively carried out, at least in part, by the products of RDT1, OXR1 and PKS1. PRF1, embedded within the elsinochrome cluster possibly functions to stabilize some of the biosynthetic enzymes required for elsinochrome production. As prefoldin is a hexamer containing 2 a and 4 b subunits, additional prefoldin subunits, whose coding genes may not immediately link to the elsinochrome biosynthetic gene cluster, are required to fulfill the chaperone function. In addition, no methyltransferase-coding gene exists within the biosynthetic gene cluster, even though elsinochrome has four methyl groups at positions C3, C7, C8 and C12. Apparently, the identified gene cluster does not contain the entire entourage of genes responsible for elsinochrome biosynthesis. Once elsinochrome is synthesized, it must be exported outside the fungal cells, which is probably accomplished by the ECT1 transporter, to avoid toxicity. The protein is Elsinochromes biosynthesis cluster protein HP2 of Elsinoe fawcettii (Citrus scab fungus).